The primary structure comprises 601 residues: MEGADLLTAGVLFLFAAVAAVPLAARLGIGAVLGYLLAGIAIGPWGLGFISDVDEILHFSELGVVFLMFIIGLELNPSRLWQLRRSIFGVGAAQVLLSAAVLAGLLMLADFLWQAAVVGGIGLAMSSTAMALQLMREKGMNRSESGQLGFSVLLFQDLAVIPALALVPLLAGSADEHFDWFKVAMKVLAFAVMLIGGRYLLRPVFRFIAASGVREVFTAATLLLVLSAALFMDALGLSMALGTFIAGVLLAESEYRHELENAIDPFKGLLLGLFFISVGMSLNLGVLYTHLLWVAASVVILVVIKMLTLYLLARVYGIRSSERMQFASVLSQGGEFAFVLFSTASSQRLFQGDQMALLLVTVTLSMMTTPLLMKGIDKWLSRRLNGPEENDEKPWVEDDKPQVIVVGFGRFGQVIARLLMANKMRITVLERDIGAVNLMRKYGYKVYYGDATQVELLRSAGAEAAESIVITCNEPEDTMKLVALCQQHFPHLHILARARGRVEAHELLQAGVTQFSRETFSSALELGRKTLVSLGMHPHQAQRAQLHFRRLDMRMLRELIPEHSDMVQISRAREARRELEEIFQREMQQERRQLDGWDEFE.

A run of 13 helical transmembrane segments spans residues 4-24 (ADLL…VPLA), 29-49 (IGAV…GLGF), 55-75 (EILH…GLEL), 87-107 (IFGV…GLLM), 111-131 (FLWQ…TAMA), 152-172 (VLLF…LLAG), 177-197 (HFDW…LIGG), 207-227 (FIAA…LVLS), 230-250 (LFMD…GVLL), 262-282 (AIDP…GMSL), 284-304 (LGVL…LVVI), 324-344 (MQFA…FSTA), and 356-376 (ALLL…MKGI). The RCK N-terminal domain occupies 400–519 (KPQVIVVGFG…AGVTQFSRET (120 aa)).

This sequence belongs to the monovalent cation:proton antiporter 2 (CPA2) transporter (TC 2.A.37) family. KefB subfamily. In terms of assembly, interacts with the regulatory subunit KefG.

It localises to the cell inner membrane. Its function is as follows. Pore-forming subunit of a potassium efflux system that confers protection against electrophiles. Catalyzes K(+)/H(+) antiport. In Salmonella newport (strain SL254), this protein is Glutathione-regulated potassium-efflux system protein KefB.